Reading from the N-terminus, the 884-residue chain is Alanine--tRNA ligase (884 aa).

His565, His569, Cys674, and His678 together coordinate Zn(2+).

The protein belongs to the class-II aminoacyl-tRNA synthetase family. Requires Zn(2+) as cofactor.

The protein resides in the cytoplasm. It carries out the reaction tRNA(Ala) + L-alanine + ATP = L-alanyl-tRNA(Ala) + AMP + diphosphate. Functionally, catalyzes the attachment of alanine to tRNA(Ala) in a two-step reaction: alanine is first activated by ATP to form Ala-AMP and then transferred to the acceptor end of tRNA(Ala). Also edits incorrectly charged Ser-tRNA(Ala) and Gly-tRNA(Ala) via its editing domain. The polypeptide is Alanine--tRNA ligase (Xanthobacter autotrophicus (strain ATCC BAA-1158 / Py2)).